Here is a 134-residue protein sequence, read N- to C-terminus: Biopolymer transport protein exbD2 (134 aa).

The Cytoplasmic segment spans residues 1-17; sequence MRLGRRTSKQEEAQIDL. A helical transmembrane segment spans residues 18-38; sequence TSMLDIVFIMLIFFIVTSSFV. Residues 39–134 are Periplasmic-facing; that stretch reads RESGVEVNRP…KSIALAAEKP (96 aa).

The protein belongs to the ExbD/TolR family. The accessory proteins ExbB and ExbD seem to form a complex with TonB.

The protein localises to the cell inner membrane. Functionally, involved in the TonB-dependent energy-dependent transport of various receptor-bound substrates. This Vibrio cholerae serotype O1 (strain ATCC 39315 / El Tor Inaba N16961) protein is Biopolymer transport protein exbD2 (exbD2).